Consider the following 227-residue polypeptide: D-lyxose/D-mannose isomerase (227 aa).

Residues lysine 90, 103–110, histidine 171, glutamate 186, and aspartate 193 each bind D-fructose; that span reads HFHWRKRE. Mn(2+) contacts are provided by histidine 103, histidine 105, glutamate 110, and histidine 171.

The protein belongs to the D-lyxose ketol-isomerase family. As to quaternary structure, homodimer; disulfide-linked. Dimerization is facilitated through a disulfide bond between the two monomers of the dimeric enzyme. Requires Mn(2+) as cofactor.

The enzyme catalyses D-lyxose = D-xylulose. It carries out the reaction D-mannose = D-fructose. Its function is as follows. Sugar isomerase that catalyzes the reversible isomerization of D-lyxose to D-xylulose, and D-mannose to D-fructose. Shows similar activity toward D-lyxose and D-mannose with a turnover and catalytic efficiency for D-lyxose as a substrate only 1.1- and 1.3-fold higher than those for D-mannose, respectively. Shows weaker activity with L-gulose, D-talose, L-ribose and L-allose. Overexpression enables cell growth on the rare pentose D-lyxose as the sole carbon source. In Escherichia coli O157:H7, this protein is D-lyxose/D-mannose isomerase.